A 411-amino-acid polypeptide reads, in one-letter code: Short chain dehydrogenase ausT (411 aa).

The NADP(+) site is built by Asp-105, Gln-137, Tyr-249, and Arg-253. Residue Tyr-249 is the Proton donor of the active site. The active-site Proton donor is Tyr-263.

It belongs to the short-chain dehydrogenases/reductases (SDR) family.

The protein operates within secondary metabolite biosynthesis; terpenoid biosynthesis. Functionally, short chain dehydrogenase; part of the gene cluster that mediates the biosynthesis of calidodehydroaustin, a fungal meroterpenoid. The first step of the pathway is the synthesis of 3,5-dimethylorsellinic acid by the polyketide synthase ausA. 3,5-dimethylorsellinic acid is then prenylated by the polyprenyl transferase ausN. Further epoxidation by the FAD-dependent monooxygenase ausM and cyclization by the probable terpene cyclase ausL lead to the formation of protoaustinoid A. Protoaustinoid A is then oxidized to spiro-lactone preaustinoid A3 by the combined action of the FAD-binding monooxygenases ausB and ausC, and the dioxygenase ausE. Acid-catalyzed keto-rearrangement and ring contraction of the tetraketide portion of preaustinoid A3 by ausJ lead to the formation of preaustinoid A4. The aldo-keto reductase ausK, with the help of ausH, is involved in the next step by transforming preaustinoid A4 into isoaustinone which is in turn hydroxylated by the P450 monooxygenase ausI to form austinolide. The cytochrome P450 monooxygenase ausG modifies austinolide to austinol. Austinol is further acetylated to austin by the O-acetyltransferase ausP, which spontaneously changes to dehydroaustin. The cytochrome P450 monooxygenase ausR then converts dehydroaustin is into 7-dehydrodehydroaustin. The hydroxylation catalyzed by ausR permits the O-acetyltransferase ausQ to add an additional acetyl group to the molecule, leading to the formation of acetoxydehydroaustin. The short chain dehydrogenase ausT catalyzes the reduction of the double bond present between carbon atoms 1 and 2 to convert 7-dehydrodehydroaustin into 1,2-dihydro-7-hydroxydehydroaustin. AusQ catalyzes not only an acetylation reaction but also the addition of the PKS ausV diketide product to 1,2-dihydro-7-hydroxydehydroaustin, forming precalidodehydroaustin. Finally, the iron/alpha-ketoglutarate-dependent dioxygenase converts precalidodehydroaustin into calidodehydroaustin. This chain is Short chain dehydrogenase ausT, found in Aspergillus calidoustus.